We begin with the raw amino-acid sequence, 198 residues long: Recombination protein RecR (198 aa).

The C4-type zinc finger occupies 57 to 72 (CSVCGHITENDPCYIC). The Toprim domain maps to 80–175 (SVICVVEDDK…KVTRLAQGLS (96 aa)).

Belongs to the RecR family.

Its function is as follows. May play a role in DNA repair. It seems to be involved in an RecBC-independent recombinational process of DNA repair. It may act with RecF and RecO. This is Recombination protein RecR from Staphylococcus aureus (strain MRSA252).